A 461-amino-acid chain; its full sequence is L-seryl-tRNA(Sec) selenium transferase (461 aa).

Position 294 is an N6-(pyridoxal phosphate)lysine (Lys-294).

The protein belongs to the SelA family. The cofactor is pyridoxal 5'-phosphate.

It localises to the cytoplasm. It catalyses the reaction L-seryl-tRNA(Sec) + selenophosphate + H(+) = L-selenocysteinyl-tRNA(Sec) + phosphate. The protein operates within aminoacyl-tRNA biosynthesis; selenocysteinyl-tRNA(Sec) biosynthesis; selenocysteinyl-tRNA(Sec) from L-seryl-tRNA(Sec) (bacterial route): step 1/1. Converts seryl-tRNA(Sec) to selenocysteinyl-tRNA(Sec) required for selenoprotein biosynthesis. The polypeptide is L-seryl-tRNA(Sec) selenium transferase (Haemophilus influenzae (strain PittEE)).